The primary structure comprises 938 residues: Isoleucine--tRNA ligase (938 aa).

The 'HIGH' region motif lies at 58-68 (PYANGSIHIGH). The residue at position 183 (lysine 183) is an N6-acetyllysine. L-isoleucyl-5'-AMP is bound at residue glutamate 561. A 'KMSKS' region motif is present at residues 602-606 (KMSKS). Lysine 605 contributes to the ATP binding site. Zn(2+) contacts are provided by cysteine 901, cysteine 904, cysteine 921, and cysteine 924.

Belongs to the class-I aminoacyl-tRNA synthetase family. IleS type 1 subfamily. As to quaternary structure, monomer. Zn(2+) serves as cofactor.

The protein resides in the cytoplasm. The enzyme catalyses tRNA(Ile) + L-isoleucine + ATP = L-isoleucyl-tRNA(Ile) + AMP + diphosphate. Its function is as follows. Catalyzes the attachment of isoleucine to tRNA(Ile). As IleRS can inadvertently accommodate and process structurally similar amino acids such as valine, to avoid such errors it has two additional distinct tRNA(Ile)-dependent editing activities. One activity is designated as 'pretransfer' editing and involves the hydrolysis of activated Val-AMP. The other activity is designated 'posttransfer' editing and involves deacylation of mischarged Val-tRNA(Ile). The polypeptide is Isoleucine--tRNA ligase (Escherichia coli O6:H1 (strain CFT073 / ATCC 700928 / UPEC)).